A 213-amino-acid polypeptide reads, in one-letter code: Putative glutathione-dependent formaldehyde-activating enzyme (213 aa).

One can recognise a CENP-V/GFA domain in the interval 19 to 165 (FPGGTLKCLC…FRELGLETYD (147 aa)). Zn(2+) is bound by residues cysteine 26, cysteine 28, cysteine 47, cysteine 49, cysteine 52, cysteine 94, and cysteine 97.

It belongs to the Gfa family. Requires Zn(2+) as cofactor.

It catalyses the reaction S-(hydroxymethyl)glutathione = glutathione + formaldehyde. Its pathway is one-carbon metabolism; formaldehyde degradation; formate from formaldehyde (glutathione route): step 1/3. In terms of biological role, catalyzes the condensation of formaldehyde and glutathione to S-hydroxymethylglutathione. This chain is Putative glutathione-dependent formaldehyde-activating enzyme, found in Podospora anserina (strain S / ATCC MYA-4624 / DSM 980 / FGSC 10383) (Pleurage anserina).